The following is a 221-amino-acid chain: 7-cyano-7-deazaguanine synthase (221 aa).

8 to 18 (MSGGMDSTLCA) provides a ligand contact to ATP. The Zn(2+) site is built by Cys187, Cys195, Cys198, and Cys201.

The protein belongs to the QueC family. Zn(2+) serves as cofactor.

It catalyses the reaction 7-carboxy-7-deazaguanine + NH4(+) + ATP = 7-cyano-7-deazaguanine + ADP + phosphate + H2O + H(+). Its pathway is purine metabolism; 7-cyano-7-deazaguanine biosynthesis. Functionally, catalyzes the ATP-dependent conversion of 7-carboxy-7-deazaguanine (CDG) to 7-cyano-7-deazaguanine (preQ(0)). In Campylobacter concisus (strain 13826), this protein is 7-cyano-7-deazaguanine synthase.